A 289-amino-acid polypeptide reads, in one-letter code: Energy-coupling factor transporter ATP-binding protein EcfA2 (289 aa).

One can recognise an ABC transporter domain in the interval isoleucine 3–aspartate 245. Glycine 40–serine 47 provides a ligand contact to ATP.

This sequence belongs to the ABC transporter superfamily. Energy-coupling factor EcfA family. Forms a stable energy-coupling factor (ECF) transporter complex composed of 2 membrane-embedded substrate-binding proteins (S component), 2 ATP-binding proteins (A component) and 2 transmembrane proteins (T component).

Its subcellular location is the cell membrane. ATP-binding (A) component of a common energy-coupling factor (ECF) ABC-transporter complex. Unlike classic ABC transporters this ECF transporter provides the energy necessary to transport a number of different substrates. This chain is Energy-coupling factor transporter ATP-binding protein EcfA2, found in Lactobacillus johnsonii (strain CNCM I-12250 / La1 / NCC 533).